Consider the following 612-residue polypeptide: Dihydroxy-acid dehydratase (612 aa).

Asp-81 contacts Mg(2+). Position 122 (Cys-122) interacts with [2Fe-2S] cluster. 2 residues coordinate Mg(2+): Asp-123 and Lys-124. Lys-124 is subject to N6-carboxylysine. Cys-193 lines the [2Fe-2S] cluster pocket. Glu-489 is a binding site for Mg(2+). Ser-515 serves as the catalytic Proton acceptor.

It belongs to the IlvD/Edd family. As to quaternary structure, homodimer. [2Fe-2S] cluster is required as a cofactor. Mg(2+) serves as cofactor.

The catalysed reaction is (2R)-2,3-dihydroxy-3-methylbutanoate = 3-methyl-2-oxobutanoate + H2O. The enzyme catalyses (2R,3R)-2,3-dihydroxy-3-methylpentanoate = (S)-3-methyl-2-oxopentanoate + H2O. It participates in amino-acid biosynthesis; L-isoleucine biosynthesis; L-isoleucine from 2-oxobutanoate: step 3/4. Its pathway is amino-acid biosynthesis; L-valine biosynthesis; L-valine from pyruvate: step 3/4. Functions in the biosynthesis of branched-chain amino acids. Catalyzes the dehydration of (2R,3R)-2,3-dihydroxy-3-methylpentanoate (2,3-dihydroxy-3-methylvalerate) into 2-oxo-3-methylpentanoate (2-oxo-3-methylvalerate) and of (2R)-2,3-dihydroxy-3-methylbutanoate (2,3-dihydroxyisovalerate) into 2-oxo-3-methylbutanoate (2-oxoisovalerate), the penultimate precursor to L-isoleucine and L-valine, respectively. The chain is Dihydroxy-acid dehydratase from Azotobacter vinelandii (strain DJ / ATCC BAA-1303).